Consider the following 276-residue polypeptide: MPELPEVETVRRTLQAKLPGLKITGVEVLLPKVIRSPELSEFKETIADKKILKVGRRGKYLLINLSEGYTLAVHLRMTGRLVYCAGQDPPARHTHVIFNLSNGCQLHFADMRQFGRIWLVPTDALDGLKGIKELGVEPLEELFTREFLKKELRRRHARIKPLLLDQTFIAGLGNIYADEALHRARINPERLATTLTPREIARLYRAIRDLLQEGIENRGTTVRDFIDGNGQAGNYQEFLQVYNREGKPCPRCGDKIAKKKVGGRSSYYCPTCQKVK.

Proline 2 acts as the Schiff-base intermediate with DNA in catalysis. The Proton donor role is filled by glutamate 3. The active-site Proton donor; for beta-elimination activity is the lysine 59. Histidine 93, arginine 112, and arginine 155 together coordinate DNA. Residues 240–274 form an FPG-type zinc finger; that stretch reads QVYNREGKPCPRCGDKIAKKKVGGRSSYYCPTCQK. Arginine 264 (proton donor; for delta-elimination activity) is an active-site residue.

Belongs to the FPG family. As to quaternary structure, monomer. Zn(2+) serves as cofactor.

The catalysed reaction is Hydrolysis of DNA containing ring-opened 7-methylguanine residues, releasing 2,6-diamino-4-hydroxy-5-(N-methyl)formamidopyrimidine.. It carries out the reaction 2'-deoxyribonucleotide-(2'-deoxyribose 5'-phosphate)-2'-deoxyribonucleotide-DNA = a 3'-end 2'-deoxyribonucleotide-(2,3-dehydro-2,3-deoxyribose 5'-phosphate)-DNA + a 5'-end 5'-phospho-2'-deoxyribonucleoside-DNA + H(+). Involved in base excision repair of DNA damaged by oxidation or by mutagenic agents. Acts as a DNA glycosylase that recognizes and removes damaged bases. Has a preference for oxidized purines, such as 7,8-dihydro-8-oxoguanine (8-oxoG). Has AP (apurinic/apyrimidinic) lyase activity and introduces nicks in the DNA strand. Cleaves the DNA backbone by beta-delta elimination to generate a single-strand break at the site of the removed base with both 3'- and 5'-phosphates. The polypeptide is Formamidopyrimidine-DNA glycosylase (Pelotomaculum thermopropionicum (strain DSM 13744 / JCM 10971 / SI)).